A 72-amino-acid chain; its full sequence is Brevinin-2GHb (72 aa).

An N-terminal signal peptide occupies residues 1–22 (MFTMKKSLLLLFFLGTVSLSLC). A propeptide spanning residues 23–42 (EQERGADEDDGGEMTEELKR) is cleaved from the precursor. An intrachain disulfide couples C66 to C72.

Expressed by the skin glands.

Its subcellular location is the secreted. Functionally, antimicrobial peptide. Active against the Gram-positive bacteria S.aureus FDA209P (MIC=16.5 ug/ml) and B.subtilis ATCC 6633 (MIC&gt;64 ug/ml), and the Gram-negative bacteria E.coli O111 (MIC=8.2 ug/ml) and E.coli ATCC 25922 (MIC=8.2 ug/ml). Not active against the fungus C.albicans. This Sylvirana guentheri (Gunther's frog) protein is Brevinin-2GHb.